The following is a 153-amino-acid chain: MALYEHIFLARQDISAQQVDALVEQYKGVIESFGGKVGRVENWGLKSLTYRIKKNRKAHYALMDIDAPAAAVHEVERQMRINEDVLRYMTIAVEAHEEGPSAMMQKRDRDDRPRRDGDRPDRGPREDRGPRPPREGGFGDREDRPRRPREDRA.

Positions 94–153 (EAHEEGPSAMMQKRDRDDRPRRDGDRPDRGPREDRGPRPPREGGFGDREDRPRRPREDRA) are disordered.

It belongs to the bacterial ribosomal protein bS6 family.

In terms of biological role, binds together with bS18 to 16S ribosomal RNA. The protein is Small ribosomal subunit protein bS6 of Agrobacterium fabrum (strain C58 / ATCC 33970) (Agrobacterium tumefaciens (strain C58)).